Reading from the N-terminus, the 417-residue chain is Serine hydroxymethyltransferase (417 aa).

Residues L120 and 124-126 (GHL) contribute to the (6S)-5,6,7,8-tetrahydrofolate site. K229 bears the N6-(pyridoxal phosphate)lysine mark. 354 to 356 (SPF) is a binding site for (6S)-5,6,7,8-tetrahydrofolate.

It belongs to the SHMT family. In terms of assembly, homodimer. Pyridoxal 5'-phosphate is required as a cofactor.

The protein localises to the cytoplasm. The catalysed reaction is (6R)-5,10-methylene-5,6,7,8-tetrahydrofolate + glycine + H2O = (6S)-5,6,7,8-tetrahydrofolate + L-serine. The protein operates within one-carbon metabolism; tetrahydrofolate interconversion. It participates in amino-acid biosynthesis; glycine biosynthesis; glycine from L-serine: step 1/1. Functionally, catalyzes the reversible interconversion of serine and glycine with tetrahydrofolate (THF) serving as the one-carbon carrier. This reaction serves as the major source of one-carbon groups required for the biosynthesis of purines, thymidylate, methionine, and other important biomolecules. Also exhibits THF-independent aldolase activity toward beta-hydroxyamino acids, producing glycine and aldehydes, via a retro-aldol mechanism. The sequence is that of Serine hydroxymethyltransferase from Acinetobacter baumannii (strain AB307-0294).